The primary structure comprises 700 residues: MGQKIHPLGFRVGITKKHQSVWFARFHKHQYAQSVLEDRFLRKNLLKLLPQLFQKKLNNSPNMPKISHIQIVRGLIPYEIGIQIHAQNCHMIKSAFEGLEVQPNFVHNLLKNHLILEKNSVKKTSLFKNAGENIELSLTAESTNDFDSTEKKRGGLNRKGEQSLNFKNSTKKTMKSNVEKRKKLFARFHQRFLGKFIVVKNGKKITKKFDSKKQLSFKNNLLSFFKKNLQERRTFRKNKFQTSFSKSSGFSKNQKNRETISLKQKAFLNFVDSKVSKANLSKPCTKFVNFYMSQTNLSFLNALKAEMNYWNQYFENSKTEEIQKFGSFRYLPLGSQKKWNLLRFKRFEKLPLPLLLKLFKALQQKALKKLERLRKEYLVFGKFSKTKTFSYYQRVRFLQNLKKFISLRKNQNSLNFSQSTFENSAQKTTNQKFALKVASLTEKSFQKKFSKIHEEKNTIKFIDHLQALVQQHRSKNLFLYLATISESRQNLKKIQQFTKQQSDFLFGISPKTLVGLTNEEKQEILKNKVSKTFFKISQKNASQKKNFQDIFVEQLQKQRTICEKNIQLTPKISIQFYSVKAQDFQTRASAVADSIVDDLEKRKAFRGVIKKAKEDLMRTPKVKGVKIQVSGRLNGAEIARSEWVRAGRVPLQTLRANIDYCYKTAQTIYGIIGVKVWIYKGYTKTRKPTANSPSVLLDLL.

Insert stretches follow at residues 88-196 and 282-587; these read NCHM…LGKF and KPCT…FQTR.

It belongs to the universal ribosomal protein uS3 family. In terms of assembly, part of the 30S ribosomal subunit.

Its subcellular location is the plastid. It localises to the chloroplast. The chain is Small ribosomal subunit protein uS3c (rps3) from Tetradesmus obliquus (Green alga).